The sequence spans 501 residues: MEKWWLNSMLRNRELAYKCGLSKSTDRFGPIENTSVSEDPPILTDMDKNIHSWNDIENCSYNNVDYLVGVENIRNFLSNKSFLVRDSKRNSYSIYFAIENQILEIDNDHLFLSELESFFSRYTNSIYLNNSSKGDGDHYMYDTESSWNNNINSFIENYIRSQICIDNYILGDGDKYNDSYFYSYICSTIRKKSSERERTSIITSTNNLNDSDFTKIEGSNDLDETQKYKHLWIECENCYGLNYKKILKSKMNICEHCGYHLKMSSSDRIELSIDPGTWNPMDEDMISVDPIEFHSEEEPYKDRIDSYQKTTGLTEAVQTGTGHLNGIPVAIGIMDFEFMGGSMGSVVGEKITRLVEYATNQLLPLIVVCASGGARMQEGSLSLMQMAKISSALYDYQLNKKLFYVSILTSPTTGGVTASFGMLGDIIIAEPNAYIAFAGKRVIEQTLNKAVPEGSQAAEYLFHKGLFDSIVPRNPLKGILSELFQLHAFFPLIQNEKESRS.

The CoA carboxyltransferase N-terminal domain occupies 231–501; the sequence is LWIECENCYG…LIQNEKESRS (271 aa). Zn(2+)-binding residues include cysteine 235, cysteine 238, cysteine 254, and cysteine 257. The segment at 235–257 adopts a C4-type zinc-finger fold; sequence CENCYGLNYKKILKSKMNICEHC.

The protein belongs to the AccD/PCCB family. As to quaternary structure, acetyl-CoA carboxylase is a heterohexamer composed of biotin carboxyl carrier protein, biotin carboxylase and 2 subunits each of ACCase subunit alpha and ACCase plastid-coded subunit beta (accD). Requires Zn(2+) as cofactor.

It is found in the plastid. Its subcellular location is the chloroplast stroma. The enzyme catalyses N(6)-carboxybiotinyl-L-lysyl-[protein] + acetyl-CoA = N(6)-biotinyl-L-lysyl-[protein] + malonyl-CoA. Its pathway is lipid metabolism; malonyl-CoA biosynthesis; malonyl-CoA from acetyl-CoA: step 1/1. In terms of biological role, component of the acetyl coenzyme A carboxylase (ACC) complex. Biotin carboxylase (BC) catalyzes the carboxylation of biotin on its carrier protein (BCCP) and then the CO(2) group is transferred by the transcarboxylase to acetyl-CoA to form malonyl-CoA. The protein is Acetyl-coenzyme A carboxylase carboxyl transferase subunit beta, chloroplastic of Lotus japonicus (Lotus corniculatus var. japonicus).